A 95-amino-acid chain; its full sequence is Osteocalcin 1 (95 aa).

The first 21 residues, 1 to 21 (MKTLSVLVLCSLAVLCLTSDA), serve as a signal peptide directing secretion. Residues 22 to 50 (SFSSQPAVDTPAQEGLFVEQEQASSVVRQ) constitute a propeptide that is removed on maturation. The Gla domain maps to 45–91 (SSVVRQAPKELSLSQLESLREVCELNLACEDMMDTSGIIAAYTTYYG). The Ca(2+) site is built by E61, E65, and E68. 4-carboxyglutamate is present on residues E61, E65, and E68. Cysteines 67 and 73 form a disulfide.

It belongs to the osteocalcin/matrix Gla protein family. In terms of processing, gamma-carboxyglutamate residues are formed by vitamin K dependent carboxylation by GGCX. These residues are essential for the binding of calcium.

Its subcellular location is the secreted. The carboxylated form is one of the main organic components of the bone matrix, which constitutes 1-2% of the total bone protein. The carboxylated form binds strongly to apatite and calcium. This Solea senegalensis (Senegalese sole) protein is Osteocalcin 1.